The following is a 671-amino-acid chain: UvrABC system protein B (671 aa).

In terms of domain architecture, Helicase ATP-binding spans 25–412; that stretch reads EGIDAGLAHQ…AGRVVEQVVR (388 aa). 38 to 45 provides a ligand contact to ATP; that stretch reads GVTGSGKT. The Beta-hairpin signature appears at 91-114; the sequence is YYDYYQPEAYVPSSDTFIEKDASI. One can recognise a Helicase C-terminal domain in the interval 429 to 595; it reads QVDDLLSEIH…GVFKDVADIM (167 aa). Residues 600-624 are disordered; the sequence is VPGSRSKKRKGMAKAAEENARYENE. The span at 614 to 624 shows a compositional bias: basic and acidic residues; that stretch reads AAEENARYENE. The UVR domain occupies 632 to 667; that stretch reads NKRIRQLEEKMYQLARDLEFEAAAQMRDEIGKLRER.

This sequence belongs to the UvrB family. In terms of assembly, forms a heterotetramer with UvrA during the search for lesions. Interacts with UvrC in an incision complex.

It localises to the cytoplasm. Functionally, the UvrABC repair system catalyzes the recognition and processing of DNA lesions. A damage recognition complex composed of 2 UvrA and 2 UvrB subunits scans DNA for abnormalities. Upon binding of the UvrA(2)B(2) complex to a putative damaged site, the DNA wraps around one UvrB monomer. DNA wrap is dependent on ATP binding by UvrB and probably causes local melting of the DNA helix, facilitating insertion of UvrB beta-hairpin between the DNA strands. Then UvrB probes one DNA strand for the presence of a lesion. If a lesion is found the UvrA subunits dissociate and the UvrB-DNA preincision complex is formed. This complex is subsequently bound by UvrC and the second UvrB is released. If no lesion is found, the DNA wraps around the other UvrB subunit that will check the other stand for damage. The chain is UvrABC system protein B from Pseudomonas savastanoi pv. phaseolicola (strain 1448A / Race 6) (Pseudomonas syringae pv. phaseolicola (strain 1448A / Race 6)).